A 426-amino-acid chain; its full sequence is tRNA methyltransferase 10 homolog C (426 aa).

The N-terminal 41 residues, 1-41, are a transit peptide targeting the mitochondrion; it reads MPVLLKMSVSITFLRPFARVLVPFTLHRKRRVLYSTIMQRY. S86 bears the Phosphoserine mark. The stretch at 138–166 forms a coiled coil; that stretch reads LYIKEKMKKARQIKKEMKKAEKEEPKKDQ. One can recognise an SAM-dependent MTase TRM10-type domain in the interval 193 to 385; sequence MGWKGAQAMQ…KFVPSRKHAG (193 aa).

Belongs to the class IV-like SAM-binding methyltransferase superfamily. TRM10 family. As to quaternary structure, component of mitochondrial ribonuclease P, a complex composed of TRMT10C/MRPP1, HSD17B10/MRPP2 and PRORP/MRPP3. Interacts with HSD17B10/MRPP2; forming the MRPP1-MRPP2 subcomplex of the mitochondrial ribonuclease P complex. Interacts with GRSF1.

The protein localises to the mitochondrion matrix. The protein resides in the mitochondrion nucleoid. It catalyses the reaction adenosine(9) in tRNA + S-adenosyl-L-methionine = N(1)-methyladenosine(9) in tRNA + S-adenosyl-L-homocysteine + H(+). The enzyme catalyses guanosine(9) in tRNA + S-adenosyl-L-methionine = N(1)-methylguanosine(9) in tRNA + S-adenosyl-L-homocysteine + H(+). It carries out the reaction an adenosine in mRNA + S-adenosyl-L-methionine = an N(1)-methyladenosine in mRNA + S-adenosyl-L-homocysteine + H(+). Its function is as follows. Mitochondrial tRNA N(1)-methyltransferase involved in mitochondrial tRNA maturation. Component of mitochondrial ribonuclease P, a complex composed of TRMT10C/MRPP1, HSD17B10/MRPP2 and PRORP/MRPP3, which cleaves tRNA molecules in their 5'-ends. Together with HSD17B10/MRPP2, forms a subcomplex of the mitochondrial ribonuclease P, named MRPP1-MRPP2 subcomplex, which displays functions that are independent of the ribonuclease P activity. The MRPP1-MRPP2 subcomplex catalyzes the formation of N(1)-methylguanine and N(1)-methyladenine at position 9 (m1G9 and m1A9, respectively) in tRNAs; TRMT10C/MRPP1 acting as the catalytic N(1)-methyltransferase subunit. The MRPP1-MRPP2 subcomplex also acts as a tRNA maturation platform: following 5'-end cleavage by the mitochondrial ribonuclease P complex, the MRPP1-MRPP2 subcomplex enhances the efficiency of 3'-processing catalyzed by ELAC2, retains the tRNA product after ELAC2 processing and presents the nascent tRNA to the mitochondrial CCA tRNA nucleotidyltransferase TRNT1 enzyme. In addition to tRNA N(1)-methyltransferase activity, TRMT10C/MRPP1 also acts as a mRNA N(1)-methyltransferase by mediating methylation of adenosine residues at the N(1) position of MT-ND5 mRNA. Associates with mitochondrial DNA complexes at the nucleoids to initiate RNA processing and ribosome assembly. This Bos taurus (Bovine) protein is tRNA methyltransferase 10 homolog C.